The following is a 150-amino-acid chain: Testis-expressed protein 22 (150 aa).

A compositionally biased stretch (basic and acidic residues) spans 1 to 23; that stretch reads MDSRKLSPRGKKLESHLSQEHRR. A disordered region spans residues 1–26; that stretch reads MDSRKLSPRGKKLESHLSQEHRRPPL.

Its subcellular location is the cytoplasm. It localises to the cytoplasmic vesicle. The protein localises to the secretory vesicle. The protein resides in the acrosome. This chain is Testis-expressed protein 22 (TEX22), found in Homo sapiens (Human).